The sequence spans 98 residues: NADH-ubiquinone oxidoreductase chain 4L (98 aa).

The next 3 membrane-spanning stretches (helical) occupy residues 1–21 (MPVV…GLLI), 29–49 (SLLC…VTVL), and 61–81 (IILL…LVMV).

Belongs to the complex I subunit 4L family. Core subunit of respiratory chain NADH dehydrogenase (Complex I) which is composed of 45 different subunits.

It is found in the mitochondrion inner membrane. The enzyme catalyses a ubiquinone + NADH + 5 H(+)(in) = a ubiquinol + NAD(+) + 4 H(+)(out). Core subunit of the mitochondrial membrane respiratory chain NADH dehydrogenase (Complex I) which catalyzes electron transfer from NADH through the respiratory chain, using ubiquinone as an electron acceptor. Part of the enzyme membrane arm which is embedded in the lipid bilayer and involved in proton translocation. In Ursus americanus (American black bear), this protein is NADH-ubiquinone oxidoreductase chain 4L (MT-ND4L).